Reading from the N-terminus, the 347-residue chain is E3 ubiquitin-protein ligase ARK2C (347 aa).

2 disordered regions span residues 23–79 (PFQR…GTLH) and 268–289 (PHKY…GEES). Positions 267 to 269 (FPH) are ubiquitin binding. Over residues 276 to 285 (PQDSKGKKDE) the composition is skewed to basic and acidic residues. The Zn(2+) site is built by Cys-295 and Cys-298. Residues 295–336 (CTICLSMLEDGEDVRRLPCMHLFHQLCVDQWLAMSKKCPICR) form an RING-type; atypical zinc finger. The ubiquitin binding stretch occupies residues 310 to 314 (RLPCM). 2 residues coordinate Zn(2+): His-318 and Cys-321.

This sequence belongs to the Arkadia family. Monomer; binding to the ubiquitin-conjugating enzyme E2 does not trigger homodimerization. As to expression, expressed in neurons of the nervous system.

It localises to the nucleus. The catalysed reaction is S-ubiquitinyl-[E2 ubiquitin-conjugating enzyme]-L-cysteine + [acceptor protein]-L-lysine = [E2 ubiquitin-conjugating enzyme]-L-cysteine + N(6)-ubiquitinyl-[acceptor protein]-L-lysine.. With respect to regulation, binds free ubiquitin non-covalently via its RING-type zinc finger. Ubiquitin-binding leads to enhance the E3 ubiquitin-protein ligase activity by stabilizing the ubiquitin-conjugating enzyme E2 (donor ubiquitin) in the 'closed' conformation and activating ubiquitin transfer. E3 ubiquitin-protein ligase that acts as a regulator of motor axon elongation. Required for efficient motor axon extension in the dorsal forelimb by enhancing the transcriptional responses of the SMAD1/SMAD5/SMAD8 effectors, which are activated downstream of BMP. Acts by mediating ubiquitination and degradation of SMAD inhibitors such as SMAD6, SMAD7, SKI and SNON isoform of SKIL. The protein is E3 ubiquitin-protein ligase ARK2C of Mus musculus (Mouse).